Consider the following 439-residue polypeptide: FK506-binding protein 59 (439 aa).

2 PPIase FKBP-type domains span residues 32-120 and 149-235; these read GCTV…LGWK and GAFV…VDCG. 3 TPR repeats span residues 252 to 285, 297 to 330, and 331 to 364; these read AKVYKEKGTNYFKKENWALAIKMYTKCKNILPTT, VATHSNIALCHQKSNDHFEAKQECNEVLALDKNN, and VKALYRRGQCNLTINELEDALEDFQKVIQLEPGN.

In terms of assembly, interacts with inaD and trpl, and may be part of the inaD signaling complex. Expression in the embryo is limited to three tissues: lymph glands, Garland cells and oenocyte cells.

It catalyses the reaction [protein]-peptidylproline (omega=180) = [protein]-peptidylproline (omega=0). In terms of biological role, may have a role in phototransduction; inhibits or prevents Ca(2+) induced stimulation of the trpl ion channel. The sequence is that of FK506-binding protein 59 from Drosophila melanogaster (Fruit fly).